A 1840-amino-acid polypeptide reads, in one-letter code: Neurexin 1 (1840 aa).

Residues 1 to 50 form a disordered region; that stretch reads MKAPHSATYQDNYADAAMTARTRPSMDMDQQRNRNQAELRLLPAQRTSTS. Topologically, residues 1–1696 are extracellular; the sequence is MKAPHSATYQ…NSIEEERTAM (1696 aa). The span at 24–37 shows a compositional bias: basic and acidic residues; sequence PSMDMDQQRNRNQA. One can recognise a Laminin G-like 1 domain in the interval 104–289; the sequence is GFQLDGSQNS…RDIKCGDVPC (186 aa). Residues 309-347 enclose the EGF-like 1 domain; that stretch reads TTDACERNDPCQHGGICISTDSGPICECRNLEYDGQYCE. Intrachain disulfides connect Cys-313–Cys-325, Cys-319–Cys-334, Cys-336–Cys-346, Cys-511–Cys-547, Cys-710–Cys-739, Cys-746–Cys-757, Cys-751–Cys-766, and Cys-768–Cys-778. 2 consecutive Laminin G-like domains span residues 352–547 and 554–739; these read PSEA…EYQC and DPVT…KPSC. An EGF-like 2 domain is found at 742–779; it reads QANVCNGNPCLNGGTCLEGWNRPICDCSATLYGGPTCG. Laminin G-like domains follow at residues 784 to 964 and 982 to 1158; these read TLAF…LPSA and HAAT…VSGC. 4 cysteine pairs are disulfide-bonded: Cys-1130/Cys-1158, Cys-1164/Cys-1175, Cys-1169/Cys-1184, and Cys-1186/Cys-1196. The EGF-like 3 domain maps to 1160–1197; it reads GPTKCSQNACANRGNCVQQWNAYACECDMTSYTGPTCY. The Laminin G-like 6 domain maps to 1201 to 1416; the sequence is IAYEFGNNKG…LIFSGAGSGC (216 aa). The tract at residues 1411 to 1651 is disordered; that stretch reads GAGSGCRGDD…DEHHPLPPLP (241 aa). A compositionally biased stretch (low complexity) spans 1447-1472; the sequence is QTTTSQQGNSLSTGGSSSGGVITNGT. Residues 1491–1527 are compositionally biased toward polar residues; the sequence is TTEQFTSTSTARGSESNNEMVTITTTGRSDVTTEQHQ. Low complexity predominate over residues 1528 to 1600; the sequence is GSSSSSSSGS…TTTTTTTTQA (73 aa). Residues 1632–1646 are compositionally biased toward basic and acidic residues; the sequence is RNDHDRMQLPDEHHP. The chain crosses the membrane as a helical span at residues 1697–1717; that stretch reads IIGIVAGILIAVVLVILLVLW. Residues 1718 to 1840 lie on the Cytoplasmic side of the membrane; the sequence is LKSNGDRGYK…DSKDVKEWYV (123 aa). The disordered stretch occupies residues 1737–1840; that stretch reads GSHNPNAALL…DSKDVKEWYV (104 aa). Polar residues predominate over residues 1747 to 1757; the sequence is GNTSTNGSYHQ. The span at 1774–1787 shows a compositional bias: low complexity; it reads QQQHHAQQQMHNGH. Over residues 1788–1813 the composition is skewed to gly residues; the sequence is NGNGNGGGGGGGGMMSSGSGSLGYGS. Positions 1831 and 1834 each coordinate Zn(2+). Positions 1831–1840 are enriched in basic and acidic residues; the sequence is DSKDVKEWYV. The short motif at 1837–1840 is the PDZ domain binding element; it reads EWYV.

It belongs to the neurexin family. Interacts (via C-terminal PDZ binding motif) with CASK (via PDZ domain). Interacts (via cytoplasmic domain) with apolpp/ApoLI; the interaction supports apolpp/ApoLI protein stability. Interact (via cytoplasmic domain) with Spn/Spinophilin. Interacts with RhoGAP100F/Syd-1 (via PDZ domain); RhoGAP100F/Syd-1 may recruit Nrx-1 to the presynaptic active zone. In terms of tissue distribution, expressed in brain, with expression in medulla, lamina, lobula, lobula plate, mushroom body and antennal lobe, and in retina (at protein level). Expressed in rabdomere of photoreceptor cells (at protein level).

Its subcellular location is the synaptic cell membrane. It localises to the presynaptic cell membrane. The protein localises to the postsynaptic cell membrane. Neuronal cell adhesion protein involved in synapse formation, development of synaptic active zones, synaptic regulation and visual function. Plays a role in cell adhesion between the pre- and the postsynaptic cell. Required for proper proliferation of synaptic boutons during larval development, a process necessary for coordinated matching of pre-and postsynaptic compartments. Promotes presynaptic active zone formation and neurotransmitter release. Spn/Spinophilin fine-tunes nrx-1/nlg1 signaling at the pre-synapse to control active zone number and functionality and thereby optimizing action potential-induced exocytosis. Required for synapse formation in central nervous system. By regulating synapse formation, may play a role in larval associative learning. Together with RhoGAP100F/syd-1, controls synapse formation at the neuromuscular junction. Essential for synaptic vesicle cycling, which plays critical roles in neurotransmission at neuromuscular junctions (NMJ). Regulated and restricts formation of glutamate receptor clusters. Mediates retinoid transport and subsequent rhodopsin maturation and may regulate lipoprotein function; thereby playing a role in vision. Regulates sleep, circadian rhythm and synaptic plasticity. Together with CASK, required for locomotion. In Drosophila melanogaster (Fruit fly), this protein is Neurexin 1.